A 1286-amino-acid polypeptide reads, in one-letter code: CLIP-associating protein 2 (1286 aa).

The golgi localization stretch occupies residues 1-40 (MRRLICKRICDYKSFDDEESVDGNRPSSAASAFKVPAPKT). Residues Ser-14 and Ser-20 each carry the phosphoserine modification. Residues 17 to 70 (DEESVDGNRPSSAASAFKVPAPKTPGNPVNSARKPGSAGGPKAGGTSKEGGAGA) are disordered. A compositionally biased stretch (gly residues) spans 53-69 (SAGGPKAGGTSKEGGAG). The interval 66 to 317 (GGAGAVDEDD…KSLQTYLKSS (252 aa)) is TOG 1. HEAT repeat units lie at residues 179–214 (HGAEAIVPTLFNLVPNSAKVMATSGCAAIRFIIRHT), 215–251 (HVPRLIPLITSNCTSKSVPVRRRSFEFLDLLLQEWQT), and 256–293 (RHAAVLVETIKKGIHDADAEARVEARKTYMGLRNHFPG). Disordered regions lie at residues 320-350 (VASLPQSDRSSSSSQESLNRPFSSKWSTANP) and 355-374 (GRVSVGGSKASPLPGSLQRS). Residues Ser-322, Ser-333, and Ser-336 each carry the phosphoserine modification. Residues 322–340 (SLPQSDRSSSSSQESLNRP) show a composition bias toward low complexity. Over residues 341-350 (FSSKWSTANP) the composition is skewed to polar residues. Residues Ser-374, Ser-376, and Ser-413 each carry the phosphoserine modification. The interval 410 to 473 (SYASLEDTSD…GSRSGSPGRV (64 aa)) is disordered. Over residues 417–431 (TSDKMDGTASEDGRV) the composition is skewed to basic and acidic residues. An interaction with microtubules, MAPRE1 and MAPRE3 region spans residues 450-565 (RGRSRTKMVS…GPGYGMSQSS (116 aa)). The span at 459-473 (SQSQPGSRSGSPGRV) shows a compositional bias: low complexity. 5 positions are modified to phosphoserine: Ser-461, Ser-465, Ser-469, Ser-484, and Ser-495. The segment at 492–566 (NSASAQKRSK…PGYGMSQSSR (75 aa)) is disordered. The short motif at 500–503 (SKIP) is the SXIP motif 1; mediates interaction with MAPRE1 and targeting to microtubule plus ends element. Ser-513 carries the phosphoserine modification. Residues 523–526 (SRIP) carry the SXIP motif 2; mediates interaction with MAPRE1 and targeting to microtubule plus ends motif. Phosphoserine is present on residues Ser-531, Ser-535, Ser-570, Ser-572, Ser-581, Ser-614, and Ser-620. Residues 606–616 (RYESYGMHSDD) show a composition bias toward basic and acidic residues. The tract at residues 606–638 (RYESYGMHSDDDANSDASSACSERSYSSRNGSI) is disordered. Low complexity predominate over residues 620 to 634 (SDASSACSERSYSSR). The segment at 642 to 873 (MRQTEDVAEV…TKLLHNHLRN (232 aa)) is TOG 2. 2 HEAT repeats span residues 702–739 (KVFSMFLETLVDFIQVHKDDLQDWLFVLLTQLLKKMGA) and 764–801 (LQFNILMRFTVDQTQTPSLKVKVAILKYIETLAKQMDP). Thr-779 carries the post-translational modification Phosphothreonine. The interval 864–1286 (TKLLHNHLRN…DPTTDVSGQS (423 aa)) is interaction with RSN and localization to the Golgi and kinetochores. 2 disordered regions span residues 870–920 (HLRN…FDYD) and 944–990 (SFRS…QPAL). 2 stretches are compositionally biased toward polar residues: residues 872–884 (RNTGNGTQSSMGS) and 893–914 (SPANWSSPLTSPTNTSQNTLSP). Phosphoserine is present on Ser-884. Phosphoserine occurs at positions 944, 947, 1005, and 1021. The segment covering 947–964 (SQEDMSEPLKRDPKKEDG) has biased composition (basic and acidic residues). The interval 1009-1286 (RDYNPYNYSD…DPTTDVSGQS (278 aa)) is required for cortical localization. 3 HEAT repeats span residues 1046–1083 (LDHSDLVAELLKELSNHNERIEERKIALYELMKLTQEE), 1090–1127 (EHFKTILLLLLETLGDKEPTIRALALKVLKEILRHQPA), and 1208–1245 (LLLPEIMPGLIQGYDNSESSVRKACVFCLVAVHAVIGD).

This sequence belongs to the CLASP family. In terms of assembly, interacts with microtubules. Interacts with MAPRE1; probably required for targeting to the growing microtubule plus ends. Interacts with CLIP2, ERC1, MAPRE3, PHLDB2 and RSN. The interaction with ERC1 may be mediated by PHLDB2. Interacts with GCC2; recruits CLASP2 to Golgi membranes. Interacts with MACF1. Interacts with SOGA1 and MTCL1. Phosphorylated by GSK3B. Phosphorylation by GSK3B may negatively regulate binding to microtubule lattices in lamella.

It is found in the cytoplasm. The protein localises to the cytoskeleton. The protein resides in the microtubule organizing center. Its subcellular location is the centrosome. It localises to the chromosome. It is found in the centromere. The protein localises to the kinetochore. The protein resides in the spindle. Its subcellular location is the golgi apparatus. It localises to the trans-Golgi network. It is found in the cell membrane. The protein localises to the cell projection. The protein resides in the ruffle membrane. Its subcellular location is the cell cortex. In terms of biological role, microtubule plus-end tracking protein that promotes the stabilization of dynamic microtubules. Involved in the nucleation of noncentrosomal microtubules originating from the trans-Golgi network (TGN). Required for the polarization of the cytoplasmic microtubule arrays in migrating cells towards the leading edge of the cell. May act at the cell cortex to enhance the frequency of rescue of depolymerizing microtubules by attaching their plus-ends to cortical platforms composed of ERC1 and PHLDB2. This cortical microtubule stabilizing activity is regulated at least in part by phosphatidylinositol 3-kinase signaling. Also performs a similar stabilizing function at the kinetochore which is essential for the bipolar alignment of chromosomes on the mitotic spindle. Acts as a mediator of ERBB2-dependent stabilization of microtubules at the cell cortex. The polypeptide is CLIP-associating protein 2 (Clasp2) (Rattus norvegicus (Rat)).